Here is a 227-residue protein sequence, read N- to C-terminus: Ubiquitin domain-containing protein 1 (227 aa).

The segment at 1-36 is disordered; that stretch reads MGNCVGRQRRERPTAPGHPRKRAGRNEPLKKERLKW. Basic and acidic residues predominate over residues 24–36; the sequence is GRNEPLKKERLKW. Positions 149 to 224 constitute a Ubiquitin-like domain; that stretch reads FPLKVRLSTG…IQVIINQPPP (76 aa).

Interacts with UBTD1.

In terms of biological role, may be involved in the regulation of cellular senescence through a positive feedback loop with TP53. Is a TP53 downstream target gene that increases the stability of TP53 protein by promoting the ubiquitination and degradation of MDM2. In Bos taurus (Bovine), this protein is Ubiquitin domain-containing protein 1 (UBTD1).